A 439-amino-acid chain; its full sequence is RNA polymerase II-associated protein RBA50 (439 aa).

Disordered regions lie at residues 1–35 and 49–79; these read MDLL…GFPE and LREK…SEAK. Positions 15–30 are enriched in polar residues; that stretch reads SVESNDNGTLSTNNCG.

Belongs to the RPAP1 family.

The protein localises to the cytoplasm. In terms of biological role, forms an interface between the RNA polymerase II enzyme and chaperone/scaffolding proteins, suggesting that it is required to connect RNA polymerase II to regulators of protein complex formation. The sequence is that of RNA polymerase II-associated protein RBA50 (RBA50) from Saccharomyces cerevisiae (strain ATCC 204508 / S288c) (Baker's yeast).